A 648-amino-acid polypeptide reads, in one-letter code: MAATRYPPNDLRRQVGSPRSKGRENKDTLCRNILIYGNCRYEDQGCTFNHDQNKNPSPQADFSKKTFNVDSPAFTPSSQPQVLAKKTTLSSQAANAAPFTPRGAGTPNLQQTAEASVFNPAAIREFTPQNYDIGNTNSNGVPQENGIYSDPFTTMGSLGSTLPSAGQYNLYASDHNSLGGPGAQFYPQHGSFPAGPLQPPNYHLYQPHDSYRQELQPWQRATYDFFIPAKMREELQKKMFATQQVMPNSGLPQLERWHSLFPLDTNNRKNTSSFGYPSWVYKAQNSRTARHYALRRLEGYRLTNEKAILTVMKEWKKIKNGNVVTVHEAFTTREFGDSSLIFAYDYHPLSKTLQEHHLQPTHGNRYRAPSAVPENVLWGYICQITNALKTIHSNKLAARCLEPSKIILSDNNRIRLSACSILDVVQFESNTKSVAELQQEDLVKFGKLILALATGAPPAHLNNIQVALDSLVTKYSANLKDAVAWLIAPSNPGESKSIENFISGIATHMTAFFDLALQDGDEKQFHLARELENGRIARSMMKLMTIIERAEPGGAQSWSETGERYQLKLFRDYVFHRVEADGKPNLAVGHMLSCLSKLDAGIDEMVVLTSRDNETVFVLSYRELKQMFDRAFNELVKHSKTGAPGANN.

The tract at residues 1–24 (MAATRYPPNDLRRQVGSPRSKGRE) is disordered. A C3H1-type zinc finger spans residues 24 to 53 (ENKDTLCRNILIYGNCRYEDQGCTFNHDQN). The interval 244 to 506 (QVMPNSGLPQ…SIENFISGIA (263 aa)) is pseudokinase domain. Residues Arg-295, 345–352 (DYHPLSKT), and 404–405 (SK) each bind ATP. Residues 507-545 (THMTAFFDLALQDGDEKQFHLARELENGRIARSMMKLMT) adopt a coiled-coil conformation. The tract at residues 546–648 (IIERAEPGGA…SKTGAPGANN (103 aa)) is knob domain.

This sequence belongs to the protein kinase superfamily. PAN3 family. In terms of assembly, homodimer. Forms a heterotrimer with a catalytic subunit PAN2 to form the poly(A)-nuclease (PAN) deadenylation complex. Interacts (via PAM-2 motif) with poly(A)-binding protein PAB1 (via PABC domain), conferring substrate specificity of the enzyme complex.

Its subcellular location is the cytoplasm. Functionally, regulatory subunit of the poly(A)-nuclease (PAN) deadenylation complex, one of two cytoplasmic mRNA deadenylases involved in mRNA turnover. PAN specifically shortens poly(A) tails of RNA and the activity is stimulated by poly(A)-binding protein PAB1. PAN deadenylation is followed by rapid degradation of the shortened mRNA tails by the CCR4-NOT complex. Deadenylated mRNAs are then degraded by two alternative mechanisms, namely exosome-mediated 3'-5' exonucleolytic degradation, or deadenylation-dependent mRNA decaping and subsequent 5'-3' exonucleolytic degradation by XRN1. May also be involved in post-transcriptional maturation of mRNA poly(A) tails. PAN3 acts as a positive regulator for PAN activity, recruiting the catalytic subunit PAN2 to mRNA via its interaction with RNA and with PAB1. The polypeptide is PAN2-PAN3 deadenylation complex subunit PAN3 (Chaetomium globosum (strain ATCC 6205 / CBS 148.51 / DSM 1962 / NBRC 6347 / NRRL 1970) (Soil fungus)).